Here is a 332-residue protein sequence, read N- to C-terminus: L-lactate dehydrogenase A chain (332 aa).

An N-acetylalanine modification is found at Ala2. At Lys5 the chain carries N6-acetyllysine; alternate. Lys5 carries the N6-succinyllysine; alternate modification. Lys14 is subject to N6-acetyllysine. Residue 29–57 (GAVGMACAISILMKDLADEVALVDVMEDK) participates in NAD(+) binding. Lys57 is subject to N6-acetyllysine; alternate. Lys57 is covalently cross-linked (Glycyl lysine isopeptide (Lys-Gly) (interchain with G-Cter in SUMO2); alternate). Lys81 carries the post-translational modification N6-acetyllysine. Residue Arg106 participates in substrate binding. Lys118 carries the N6-acetyllysine; alternate modification. Lys118 carries the post-translational modification N6-succinyllysine; alternate. Lys126 is subject to N6-acetyllysine. Asn138 lines the NAD(+) pocket. Residues Asn138 and Arg169 each contribute to the substrate site. His193 serves as the catalytic Proton acceptor. Lys224 and Lys232 each carry N6-acetyllysine. Tyr239 carries the post-translational modification Phosphotyrosine. Position 243 is an N6-acetyllysine (Lys243). Thr248 is a binding site for substrate. Thr309 carries the phosphothreonine modification. At Lys318 the chain carries N6-acetyllysine; alternate. The residue at position 318 (Lys318) is an N6-succinyllysine; alternate. At Thr322 the chain carries Phosphothreonine.

This sequence belongs to the LDH/MDH superfamily. LDH family. Homotetramer. Interacts with PTEN upstream reading frame protein MP31. In terms of processing, ISGylated.

It is found in the cytoplasm. The catalysed reaction is (S)-lactate + NAD(+) = pyruvate + NADH + H(+). It functions in the pathway fermentation; pyruvate fermentation to lactate; (S)-lactate from pyruvate: step 1/1. Interconverts simultaneously and stereospecifically pyruvate and lactate with concomitant interconversion of NADH and NAD(+). The polypeptide is L-lactate dehydrogenase A chain (LDHA) (Bos mutus grunniens (Wild yak)).